The primary structure comprises 251 residues: Flap endonuclease Xni (251 aa).

A Mg(2+)-binding site is contributed by D104. Positions 160–249 (VQPQQLPDYW…IDGNLQQLRL (90 aa)) constitute a 5'-3' exonuclease domain. L171, A172, P180, V182, and I185 together coordinate K(+). The segment at 184 to 189 (GIGPKS) is interaction with DNA.

This sequence belongs to the Xni family. It depends on Mg(2+) as a cofactor. K(+) serves as cofactor.

Functionally, has flap endonuclease activity. During DNA replication, flap endonucleases cleave the 5'-overhanging flap structure that is generated by displacement synthesis when DNA polymerase encounters the 5'-end of a downstream Okazaki fragment. In Escherichia coli O6:K15:H31 (strain 536 / UPEC), this protein is Flap endonuclease Xni.